A 208-amino-acid polypeptide reads, in one-letter code: Casparian strip membrane protein 2 (208 aa).

Residues 1-23 are disordered; that stretch reads MDSKSGRSESAINIPESNSTKHK. Over 1–46 the chain is Cytoplasmic; the sequence is MDSKSGRSESAINIPESNSTKHKSTVVHTATKVAAVAPRGGGWRRG. The segment covering 8–18 has biased composition (polar residues); sequence SESAINIPESN. Residues 47 to 67 traverse the membrane as a helical segment; that stretch reads VSIFDFILRICALAAALAATA. Over 68 to 96 the chain is Extracellular; that stretch reads TMGTTDQTLPFFTQFFQFQASYDDLPAFT. Residues 97–117 traverse the membrane as a helical segment; that stretch reads FFVVANGIASGYLVLSLPFSI. The Cytoplasmic segment spans residues 118–129; sequence ATIVRPHAAAIK. The chain crosses the membrane as a helical span at residues 130 to 150; the sequence is LLLIIFDTVMVAFTAAAAAAA. The Extracellular segment spans residues 151 to 184; that stretch reads AAIVYLAHNGNSKTNWFAICQQFNDFCQRVSGAV. The helical transmembrane segment at 185 to 205 threads the bilayer; the sequence is VASFVAAVILIFLVVLSAVAI. Residues 206-208 are Cytoplasmic-facing; the sequence is RKH.

It belongs to the Casparian strip membrane proteins (CASP) family. In terms of assembly, homodimer and heterodimers.

The protein localises to the cell membrane. In terms of biological role, regulates membrane-cell wall junctions and localized cell wall deposition. Required for establishment of the Casparian strip membrane domain (CSD) and the subsequent formation of Casparian strips, a cell wall modification of the root endodermis that determines an apoplastic barrier between the intraorganismal apoplasm and the extraorganismal apoplasm and prevents lateral diffusion. The polypeptide is Casparian strip membrane protein 2 (Triphysaria pusilla (Dwarf owl's-clover)).